The chain runs to 67 residues: Large ribosomal subunit protein uL29 (67 aa).

The protein belongs to the universal ribosomal protein uL29 family.

The protein is Large ribosomal subunit protein uL29 of Solibacter usitatus (strain Ellin6076).